We begin with the raw amino-acid sequence, 190 residues long: UPF0301 protein Reut_A0705 (190 aa).

This sequence belongs to the UPF0301 (AlgH) family.

This is UPF0301 protein Reut_A0705 from Cupriavidus pinatubonensis (strain JMP 134 / LMG 1197) (Cupriavidus necator (strain JMP 134)).